The primary structure comprises 729 residues: ATP-dependent DNA helicase Hel308 (729 aa).

Residues Gln-28 and 46–53 (IPTASGKT) each bind ATP. One can recognise a Helicase ATP-binding domain in the interval 33-199 (EKGLLEGRNL…WLEAELVVSE (167 aa)). The DEAH box motif lies at 144–147 (DEVH). Positions 232–426 (AVNLALDTLK…SKLGTENALR (195 aa)) constitute a Helicase C-terminal domain. Residues 706–729 (SSGIIASEPPEKSPYSGQKTISDY) form a disordered region. Over residues 720 to 729 (YSGQKTISDY) the composition is skewed to polar residues.

This sequence belongs to the helicase family. Hel308 subfamily. In terms of assembly, monomer.

It catalyses the reaction Couples ATP hydrolysis with the unwinding of duplex DNA by translocating in the 3'-5' direction.. The catalysed reaction is ATP + H2O = ADP + phosphate + H(+). Functionally, DNA-dependent ATPase and 3'-5' DNA helicase that may be involved in repair of stalled replication forks. This Methanosarcina barkeri (strain Fusaro / DSM 804) protein is ATP-dependent DNA helicase Hel308.